We begin with the raw amino-acid sequence, 468 residues long: 3-isopropylmalate dehydratase large subunit (468 aa).

3 residues coordinate [4Fe-4S] cluster: Cys-346, Cys-406, and Cys-409.

Belongs to the aconitase/IPM isomerase family. LeuC type 1 subfamily. Heterodimer of LeuC and LeuD. Requires [4Fe-4S] cluster as cofactor.

The enzyme catalyses (2R,3S)-3-isopropylmalate = (2S)-2-isopropylmalate. Its pathway is amino-acid biosynthesis; L-leucine biosynthesis; L-leucine from 3-methyl-2-oxobutanoate: step 2/4. Functionally, catalyzes the isomerization between 2-isopropylmalate and 3-isopropylmalate, via the formation of 2-isopropylmaleate. In Pseudoalteromonas atlantica (strain T6c / ATCC BAA-1087), this protein is 3-isopropylmalate dehydratase large subunit.